The primary structure comprises 235 residues: Uridylate kinase (235 aa).

An ATP-binding site is contributed by 9–12 (KLSG). Position 51 (G51) interacts with UMP. G52 and R56 together coordinate ATP. Residues D71 and 132-139 (TGNPYFTT) contribute to the UMP site. Positions 159, 165, and 168 each coordinate ATP.

Belongs to the UMP kinase family. In terms of assembly, homohexamer.

It is found in the cytoplasm. The catalysed reaction is UMP + ATP = UDP + ADP. Its pathway is pyrimidine metabolism; CTP biosynthesis via de novo pathway; UDP from UMP (UMPK route): step 1/1. Inhibited by UTP. Functionally, catalyzes the reversible phosphorylation of UMP to UDP. In Flavobacterium psychrophilum (strain ATCC 49511 / DSM 21280 / CIP 103535 / JIP02/86), this protein is Uridylate kinase.